The following is a 242-amino-acid chain: Tyrosine recombinase XerD-like (242 aa).

The Core-binding (CB) domain maps to 1–71 (MKEAIDQFIQ…AVNQFLYFLY (71 aa)). Residues 90-242 (ENSSQGSLLD…KSITTLEKYR (153 aa)) enclose the Tyr recombinase domain. Residues Lys148 and Arg209 contribute to the active site. Catalysis depends on Tyr241, which acts as the O-(3'-phospho-DNA)-tyrosine intermediate.

The protein belongs to the 'phage' integrase family. XerD-like subfamily.

It localises to the cytoplasm. Putative tyrosine recombinase. Not involved in the cutting and rejoining of the recombining DNA molecules on dif(SL) site. In Streptococcus gordonii (strain Challis / ATCC 35105 / BCRC 15272 / CH1 / DL1 / V288), this protein is Tyrosine recombinase XerD-like.